Here is a 352-residue protein sequence, read N- to C-terminus: CD5 antigen-like (352 aa).

A signal peptide spans methionine 1–serine 21. 3 consecutive SRCR domains span residues valine 27–glutamate 128, valine 141–glutamate 241, and leucine 246–threonine 348. 11 disulfides stabilise this stretch: cysteine 36–cysteine 70, cysteine 52–cysteine 117, cysteine 65–cysteine 127, cysteine 98–cysteine 108, cysteine 166–cysteine 230, cysteine 179–cysteine 240, cysteine 211–cysteine 221, cysteine 255–cysteine 289, cysteine 271–cysteine 337, cysteine 284–cysteine 347, and cysteine 317–cysteine 327. An N-linked (GlcNAc...) asparagine glycan is attached at asparagine 99. A glycan (N-linked (GlcNAc...) asparagine) is linked at asparagine 229.

As to quaternary structure, interacts with FASN; the interaction is direct. Interacts (via SRCR2 and SRCR3) with pentameric IgM (via Fc region); disulfide-linked. N-glycosylated. N-glycan at Asn-99 possesses only alpha2,6-sialylated terminals, while Asn-229 possesses both alpha2,6-sialylated and non-sialylated terminals. N-glycosylation increases secretion. Specifically expressed in tissue macrophages. Expressed in thymus, liver, spleen and lymph nodes. Present in Th17 cells; mainly present in non-pathogenic Th17 cells.

Its subcellular location is the secreted. The protein localises to the cytoplasm. Its function is as follows. Secreted protein that acts as a key regulator of lipid synthesis: mainly expressed by macrophages in lymphoid and inflamed tissues and regulates mechanisms in inflammatory responses, such as infection or atherosclerosis. Able to inhibit lipid droplet size in adipocytes. Following incorporation into mature adipocytes via CD36-mediated endocytosis, associates with cytosolic FASN, inhibiting fatty acid synthase activity and leading to lipolysis, the degradation of triacylglycerols into glycerol and free fatty acids (FFA). CD5L-induced lipolysis occurs with progression of obesity: participates in obesity-associated inflammation following recruitment of inflammatory macrophages into adipose tissues, a cause of insulin resistance and obesity-related metabolic disease. Regulation of intracellular lipids mediated by CD5L has a direct effect on transcription regulation mediated by nuclear receptors ROR-gamma (RORC). Acts as a key regulator of metabolic switch in T-helper Th17 cells. Regulates the expression of pro-inflammatory genes in Th17 cells by altering the lipid content and limiting synthesis of cholesterol ligand of RORC, the master transcription factor of Th17-cell differentiation. CD5L is mainly present in non-pathogenic Th17 cells, where it decreases the content of polyunsaturated fatty acyls (PUFA), affecting two metabolic proteins MSMO1 and CYP51A1, which synthesize ligands of RORC, limiting RORC activity and expression of pro-inflammatory genes. Participates in obesity-associated autoimmunity via its association with IgM, interfering with the binding of IgM to Fcalpha/mu receptor and enhancing the development of long-lived plasma cells that produce high-affinity IgG autoantibodies. Also acts as an inhibitor of apoptosis in macrophages: promotes macrophage survival from the apoptotic effects of oxidized lipids in case of atherosclerosis. Involved in early response to microbial infection against various pathogens by acting as a pattern recognition receptor and by promoting autophagy. The sequence is that of CD5 antigen-like (Cd5l) from Mus musculus (Mouse).